Reading from the N-terminus, the 761-residue chain is Autophagy-related protein 13 (761 aa).

3 stretches are compositionally biased toward low complexity: residues methionine 1–glutamine 10, serine 290–lysine 303, and serine 327–proline 340. 6 disordered regions span residues methionine 1–threonine 25, phenylalanine 277–serine 367, isoleucine 398–leucine 456, aspartate 488–isoleucine 507, histidine 544–serine 642, and tyrosine 691–phenylalanine 761. Composition is skewed to polar residues over residues proline 344–serine 367 and glycine 400–threonine 411. Residues arginine 429–serine 444 are compositionally biased toward low complexity. Over residues threonine 445–leucine 456 the composition is skewed to polar residues. Over residues glutamine 566–histidine 590 the composition is skewed to low complexity. Basic and acidic residues predominate over residues arginine 600–glutamine 613. The segment covering threonine 614–valine 631 has biased composition (polar residues). The segment covering proline 632–serine 642 has biased composition (low complexity). Residues phenylalanine 695 to aspartate 709 are compositionally biased toward acidic residues. Basic and acidic residues predominate over residues arginine 710–asparagine 720. Over residues serine 721–lysine 730 the composition is skewed to polar residues.

Belongs to the ATG13 family. Fungi subfamily. As to quaternary structure, interacts with ATG1 to form the ATG1-ATG13 kinase complex.

The protein localises to the cytoplasm. It is found in the preautophagosomal structure. Its function is as follows. Plays a key role in autophagy. Activates the atg1 kinase in a nutritional condition dependent manner through the TOR pathway, leading to autophagy. Also involved in cytoplasm to vacuole transport (Cvt) and more specifically in Cvt vesicle formation. Seems to play a role in the switching machinery regulating the conversion between the Cvt pathway and autophagy. Finally, plays an important role in biofilm formation and resistance to antifungal compounds such as fluconazole, itraconazole, terbinafine and caspofungin. The polypeptide is Autophagy-related protein 13 (Candida albicans (strain SC5314 / ATCC MYA-2876) (Yeast)).